Consider the following 183-residue polypeptide: MMQICDTYNQKHSLFNAMNRFIGAVNNMDQTVMVPSLLRDVPLADPGLDNDVGVEVGGSGGCLEERTPPVPDSGSANGSFFAPSRDMYSHYVLLKSIRNDIEWGVLHQPPPPAGSEEGSAWKSKDILVDLGHLEGADAGEEDLEQQFHYHLRGLHTVLSKLTRKANILTNRYKQEIGFGNWGH.

An N-acetylmethionine modification is found at Met1. Phosphoserine is present on residues Ser75 and Ser79.

The protein belongs to the SPOT14 family. Homodimer in the absence of THRSP. Heterodimer with THRSP. The homodimer interacts with ACACA and ACACB. Promotes polymerization of Acetyl-CoA carboxylase to form complexes that contain MID1IP1 and ACACA and/or ACACB. Interaction with THRSP interferes with ACACA binding.

It is found in the nucleus. The protein resides in the cytoplasm. It localises to the cytoskeleton. Functionally, plays a role in the regulation of lipogenesis in liver. Up-regulates ACACA enzyme activity. Required for efficient lipid biosynthesis, including triacylglycerol, diacylglycerol and phospholipid. Involved in stabilization of microtubules. The sequence is that of Mid1-interacting protein 1 (MID1IP1) from Homo sapiens (Human).